The primary structure comprises 289 residues: uncharacterized protein (289 aa).

This is an uncharacterized protein from Schizosaccharomyces pombe (strain 972 / ATCC 24843) (Fission yeast).